The chain runs to 118 residues: UPF0102 protein CHY_1414 (118 aa).

It belongs to the UPF0102 family.

In Carboxydothermus hydrogenoformans (strain ATCC BAA-161 / DSM 6008 / Z-2901), this protein is UPF0102 protein CHY_1414.